Reading from the N-terminus, the 347-residue chain is NADH-ubiquinone oxidoreductase chain 2 (347 aa).

The next 10 membrane-spanning stretches (helical) occupy residues 1–21 (MNPS…MMVI), 25–45 (HWLL…PIMM), 59–79 (YLLT…INLM), 96–116 (TLMT…FWVP), 122–142 (IPLT…LSIL), 149–169 (INLY…GWGG), 200–220 (LTLL…MLFI), 239–259 (IITT…PLSG), 274–294 (DILI…YFYM), and 325–345 (LLPT…MLSI).

Belongs to the complex I subunit 2 family. Core subunit of respiratory chain NADH dehydrogenase (Complex I) which is composed of 45 different subunits. Interacts with TMEM242.

It localises to the mitochondrion inner membrane. The catalysed reaction is a ubiquinone + NADH + 5 H(+)(in) = a ubiquinol + NAD(+) + 4 H(+)(out). Functionally, core subunit of the mitochondrial membrane respiratory chain NADH dehydrogenase (Complex I) which catalyzes electron transfer from NADH through the respiratory chain, using ubiquinone as an electron acceptor. Essential for the catalytic activity and assembly of complex I. The sequence is that of NADH-ubiquinone oxidoreductase chain 2 from Balaenoptera musculus (Blue whale).